Here is a 693-residue protein sequence, read N- to C-terminus: Elongation factor G (693 aa).

Positions 8–282 constitute a tr-type G domain; that stretch reads KNTRNIGIMA…AAIEYLPSPL (275 aa). Residues 17–24, 81–85, and 135–138 each bind GTP; these read AHIDAGKT, DTPGH, and NKMD.

Belongs to the TRAFAC class translation factor GTPase superfamily. Classic translation factor GTPase family. EF-G/EF-2 subfamily.

Its subcellular location is the cytoplasm. Its function is as follows. Catalyzes the GTP-dependent ribosomal translocation step during translation elongation. During this step, the ribosome changes from the pre-translocational (PRE) to the post-translocational (POST) state as the newly formed A-site-bound peptidyl-tRNA and P-site-bound deacylated tRNA move to the P and E sites, respectively. Catalyzes the coordinated movement of the two tRNA molecules, the mRNA and conformational changes in the ribosome. This chain is Elongation factor G, found in Macrococcus caseolyticus (strain JCSC5402) (Macrococcoides caseolyticum).